The sequence spans 209 residues: Uracil phosphoribosyltransferase (209 aa).

5-phospho-alpha-D-ribose 1-diphosphate is bound by residues R79, R104, and 131–139 (DPMLATGGS). Residues I194 and 199-201 (GDA) contribute to the uracil site. Residue D200 coordinates 5-phospho-alpha-D-ribose 1-diphosphate.

It belongs to the UPRTase family. Requires Mg(2+) as cofactor.

The enzyme catalyses UMP + diphosphate = 5-phospho-alpha-D-ribose 1-diphosphate + uracil. It participates in pyrimidine metabolism; UMP biosynthesis via salvage pathway; UMP from uracil: step 1/1. With respect to regulation, allosterically activated by GTP. Catalyzes the conversion of uracil and 5-phospho-alpha-D-ribose 1-diphosphate (PRPP) to UMP and diphosphate. The protein is Uracil phosphoribosyltransferase of Clostridioides difficile (strain 630) (Peptoclostridium difficile).